A 259-amino-acid chain; its full sequence is Acyl-[acyl-carrier-protein]--UDP-N-acetylglucosamine O-acyltransferase (259 aa).

It belongs to the transferase hexapeptide repeat family. LpxA subfamily. As to quaternary structure, homotrimer.

It localises to the cytoplasm. The catalysed reaction is a (3R)-hydroxyacyl-[ACP] + UDP-N-acetyl-alpha-D-glucosamine = a UDP-3-O-[(3R)-3-hydroxyacyl]-N-acetyl-alpha-D-glucosamine + holo-[ACP]. The protein operates within glycolipid biosynthesis; lipid IV(A) biosynthesis; lipid IV(A) from (3R)-3-hydroxytetradecanoyl-[acyl-carrier-protein] and UDP-N-acetyl-alpha-D-glucosamine: step 1/6. In terms of biological role, involved in the biosynthesis of lipid A, a phosphorylated glycolipid that anchors the lipopolysaccharide to the outer membrane of the cell. This is Acyl-[acyl-carrier-protein]--UDP-N-acetylglucosamine O-acyltransferase from Psychrobacter arcticus (strain DSM 17307 / VKM B-2377 / 273-4).